The chain runs to 425 residues: Histone-binding protein RBBP7 (425 aa).

7 WD repeats span residues 47 to 122 (QWLP…KINH), 128 to 173 (RARY…LRLR), 181 to 217 (GLSW…KVVD), 228 to 269 (VVED…HSVD), 275 to 312 (VNCL…LHSF), 318 to 369 (EIFQ…LFIH), and 376 to 403 (ISDF…IWQM).

The protein belongs to the WD repeat RBAP46/RBAP48/MSI1 family. In terms of assembly, binds directly to helix 1 of the histone fold of histone H4, a region that is not accessible when H4 is in chromatin.

Its subcellular location is the nucleus. In terms of biological role, core histone-binding subunit that may target chromatin remodeling factors, histone acetyltransferases and histone deacetylases to their histone substrates in a manner that is regulated by nucleosomal DNA. Component of several complexes which regulate chromatin metabolism. The sequence is that of Histone-binding protein RBBP7 (rbbp7) from Xenopus laevis (African clawed frog).